The primary structure comprises 241 residues: Small ribosomal subunit protein uS5 (241 aa).

The segment at 1 to 53 (MSDNEKETQVAEETQNTQAAAESNNEDRKSRRGQRGEGRRGERRNRREESHEN) is disordered. Positions 11–22 (AEETQNTQAAAE) are enriched in low complexity. Positions 25 to 53 (NEDRKSRRGQRGEGRRGERRNRREESHEN) are enriched in basic and acidic residues. Positions 55–118 (MLDRVVTINR…LDAKKHMFTV (64 aa)) constitute an S5 DRBM domain.

The protein belongs to the universal ribosomal protein uS5 family. In terms of assembly, part of the 30S ribosomal subunit. Contacts proteins S4 and S8.

In terms of biological role, with S4 and S12 plays an important role in translational accuracy. Located at the back of the 30S subunit body where it stabilizes the conformation of the head with respect to the body. In Bifidobacterium adolescentis (strain ATCC 15703 / DSM 20083 / NCTC 11814 / E194a), this protein is Small ribosomal subunit protein uS5.